The following is a 182-amino-acid chain: uncharacterized protein (182 aa).

The next 2 membrane-spanning stretches (helical) occupy residues 29–49 and 63–83; these read IISGLFLGLALLSTYLIAGLP and FYFPFFMTIGFINLIISMLTL.

The protein resides in the cell membrane. This is an uncharacterized protein from Ureaplasma parvum serovar 3 (strain ATCC 700970).